The chain runs to 285 residues: Shikimate dehydrogenase (NADP(+)) (285 aa).

Residues 20–22 (SIS) and S67 contribute to the shikimate site. The Proton acceptor role is filled by K71. E83 is an NADP(+) binding site. Positions 92 and 107 each coordinate shikimate. NADP(+) contacts are provided by residues 129–133 (GAGGA) and M227. Y229 contacts shikimate. NADP(+) is bound at residue G250.

The protein belongs to the shikimate dehydrogenase family. Homodimer.

It catalyses the reaction shikimate + NADP(+) = 3-dehydroshikimate + NADPH + H(+). It functions in the pathway metabolic intermediate biosynthesis; chorismate biosynthesis; chorismate from D-erythrose 4-phosphate and phosphoenolpyruvate: step 4/7. In terms of biological role, involved in the biosynthesis of the chorismate, which leads to the biosynthesis of aromatic amino acids. Catalyzes the reversible NADPH linked reduction of 3-dehydroshikimate (DHSA) to yield shikimate (SA). The protein is Shikimate dehydrogenase (NADP(+)) of Streptococcus gordonii (strain Challis / ATCC 35105 / BCRC 15272 / CH1 / DL1 / V288).